The following is a 125-amino-acid chain: PCNA-associated factor (125 aa).

Positions 1 to 125 (MVRTKADSAG…SEEAADSDDE (125 aa)) are disordered. Over residues 8 to 17 (SAGSSASSGS) the composition is skewed to low complexity. The D-box motif lies at 28 to 39 (RKTFGSSSSGSN). The PIP-box motif lies at 68–79 (QKGIGEFFGSPS). Positions 85–87 (KEN) match the KEN box motif. Positions 95 to 107 (EAGGSGAGKAPRK) match the Initiation motif motif. The span at 115 to 125 (PSEEAADSDDE) shows a compositional bias: acidic residues.

In terms of assembly, interacts with pcna.

The protein localises to the nucleus. The protein resides in the cytoplasm. It is found in the perinuclear region. In terms of biological role, PCNA-binding protein that acts as a regulator of DNA repair during DNA replication. Following DNA damage, the interaction with pcna is disrupted, facilitating the interaction between monoubiquitinated pcna and the translesion DNA synthesis DNA polymerase eta (polh) at stalled replisomes, facilitating the bypass of replication-fork-blocking lesions. Also acts as a regulator of centrosome number. This is PCNA-associated factor from Xenopus tropicalis (Western clawed frog).